A 269-amino-acid chain; its full sequence is MPELPEVETSRRGIEPHLVGATILHAHIRNGRLRWPVSDEIYRLSDTPVLSVQRRAKYLLLELPDGWIIIHLGMSGSLRILSEALPAEKHDHVDLVMSNGKILRYTDPRRFGAWLWTKELEGHNVLAHLGPEPLSDEFNGEYLQQKCAKKKTAIKPWLMDNKLVVGVGNIYASESLFAAGIHPDRLASSLSTEECDLLARVIKAVLLRSIEQGGTTLKDFLQSDGKPGYFAQELQVYGRKGEPCRVCGTPIVATKHAQRATFYCRHCQK.

Catalysis depends on Pro-2, which acts as the Schiff-base intermediate with DNA. Catalysis depends on Glu-3, which acts as the Proton donor. Lys-57 functions as the Proton donor; for beta-elimination activity in the catalytic mechanism. DNA-binding residues include His-90, Arg-109, and Lys-150. Residues 235–269 (QVYGRKGEPCRVCGTPIVATKHAQRATFYCRHCQK) form an FPG-type zinc finger. Arg-259 serves as the catalytic Proton donor; for delta-elimination activity.

This sequence belongs to the FPG family. As to quaternary structure, monomer. Requires Zn(2+) as cofactor.

The catalysed reaction is Hydrolysis of DNA containing ring-opened 7-methylguanine residues, releasing 2,6-diamino-4-hydroxy-5-(N-methyl)formamidopyrimidine.. It catalyses the reaction 2'-deoxyribonucleotide-(2'-deoxyribose 5'-phosphate)-2'-deoxyribonucleotide-DNA = a 3'-end 2'-deoxyribonucleotide-(2,3-dehydro-2,3-deoxyribose 5'-phosphate)-DNA + a 5'-end 5'-phospho-2'-deoxyribonucleoside-DNA + H(+). Functionally, involved in base excision repair of DNA damaged by oxidation or by mutagenic agents. Acts as a DNA glycosylase that recognizes and removes damaged bases. Has a preference for oxidized purines, such as 7,8-dihydro-8-oxoguanine (8-oxoG). Has AP (apurinic/apyrimidinic) lyase activity and introduces nicks in the DNA strand. Cleaves the DNA backbone by beta-delta elimination to generate a single-strand break at the site of the removed base with both 3'- and 5'-phosphates. The sequence is that of Formamidopyrimidine-DNA glycosylase from Salmonella enteritidis PT4 (strain P125109).